The chain runs to 231 residues: ATP phosphoribosyltransferase (231 aa).

It belongs to the ATP phosphoribosyltransferase family. Short subfamily. Heteromultimer composed of HisG and HisZ subunits.

It is found in the cytoplasm. The enzyme catalyses 1-(5-phospho-beta-D-ribosyl)-ATP + diphosphate = 5-phospho-alpha-D-ribose 1-diphosphate + ATP. It participates in amino-acid biosynthesis; L-histidine biosynthesis; L-histidine from 5-phospho-alpha-D-ribose 1-diphosphate: step 1/9. In terms of biological role, catalyzes the condensation of ATP and 5-phosphoribose 1-diphosphate to form N'-(5'-phosphoribosyl)-ATP (PR-ATP). Has a crucial role in the pathway because the rate of histidine biosynthesis seems to be controlled primarily by regulation of HisG enzymatic activity. This is ATP phosphoribosyltransferase (hisG) from Sinorhizobium fredii (strain NBRC 101917 / NGR234).